The primary structure comprises 255 residues: Major prion protein (255 aa).

The signal sequence occupies residues 1 to 24 (MVKSHIGSWILVLFVAMWSDVGLC). The interaction with ADGRG6 stretch occupies residues 25-41 (KKRPKPGGGWNTGGSRY). Residues 25-232 (KKRPKPGGGW…ESEAYYQRGA (208 aa)) form an interaction with GRB2, ERI3 and SYN1 region. The disordered stretch occupies residues 28–110 (PKPGGGWNTG…QWNKPSKPKT (83 aa)). Tandem repeats lie at residues 54–62 (PQGGGGWGQ), 63–70 (PHGGGWGQ), 71–78 (PHGGGWGQ), 79–86 (PHGGGWGQ), and 87–94 (PHGGGGWG). Positions 54-94 (PQGGGGWGQPHGGGWGQPHGGGWGQPHGGGWGQPHGGGGWG) are 5 X 8 AA tandem repeats of P-H-G-G-G-W-G-Q. Over residues 55–97 (QGGGGWGQPHGGGWGQPHGGGWGQPHGGGWGQPHGGGGWGQGG) the composition is skewed to gly residues. Residues histidine 64, glycine 65, glycine 66, histidine 72, glycine 73, glycine 74, histidine 80, glycine 81, glycine 82, histidine 88, glycine 90, and glycine 91 each contribute to the Cu(2+) site. N-linked (GlcNAc...) asparagine glycans are attached at residues asparagine 174, asparagine 184, and asparagine 199. Cysteine 182 and cysteine 216 are joined by a disulfide. Alanine 232 carries GPI-anchor amidated alanine lipidation. Residues 233-255 (SVILFSSPPVILLVSFLIFLIVG) constitute a propeptide, removed in mature form.

It belongs to the prion family. As to quaternary structure, monomer and homodimer. Has a tendency to aggregate into amyloid fibrils containing a cross-beta spine, formed by a steric zipper of superposed beta-strands. Soluble oligomers may represent an intermediate stage on the path to fibril formation. Copper binding may promote oligomerization. Interacts with GRB2, APP, ERI3/PRNPIP and SYN1. Mislocalized cytosolically exposed PrP interacts with MGRN1; this interaction alters MGRN1 subcellular location and causes lysosomal enlargement. Interacts with APP. Interacts with KIAA1191. Interacts with ADGRG6.

It is found in the cell membrane. Its subcellular location is the golgi apparatus. Its function is as follows. Its primary physiological function is unclear. May play a role in neuronal development and synaptic plasticity. May be required for neuronal myelin sheath maintenance. May promote myelin homeostasis through acting as an agonist for ADGRG6 receptor. May play a role in iron uptake and iron homeostasis. Soluble oligomers are toxic to cultured neuroblastoma cells and induce apoptosis (in vitro). Association with GPC1 (via its heparan sulfate chains) targets PRNP to lipid rafts. Also provides Cu(2+) or Zn(2+) for the ascorbate-mediated GPC1 deaminase degradation of its heparan sulfate side chains. This chain is Major prion protein (PRNP), found in Canis lupus familiaris (Dog).